The following is a 322-amino-acid chain: Pantothenate kinase (322 aa).

Residue 100 to 107 (GSVAVGKS) coordinates ATP.

It belongs to the prokaryotic pantothenate kinase family.

The protein localises to the cytoplasm. It carries out the reaction (R)-pantothenate + ATP = (R)-4'-phosphopantothenate + ADP + H(+). It participates in cofactor biosynthesis; coenzyme A biosynthesis; CoA from (R)-pantothenate: step 1/5. The polypeptide is Pantothenate kinase (Brucella canis (strain ATCC 23365 / NCTC 10854 / RM-666)).